Consider the following 98-residue polypeptide: Integration host factor subunit alpha (98 aa).

The interval 49-70 (FGNFDLRDKNQRPGRNPKTGED) is disordered.

The protein belongs to the bacterial histone-like protein family. Heterodimer of an alpha and a beta chain.

In terms of biological role, this protein is one of the two subunits of integration host factor, a specific DNA-binding protein that functions in genetic recombination as well as in transcriptional and translational control. The chain is Integration host factor subunit alpha from Yersinia pestis.